Reading from the N-terminus, the 146-residue chain is Large ribosomal subunit protein uL16c (146 aa).

It belongs to the universal ribosomal protein uL16 family. As to quaternary structure, part of the 50S ribosomal subunit.

The protein resides in the plastid. It localises to the chloroplast. This Angiopteris evecta (Mule's foot fern) protein is Large ribosomal subunit protein uL16c.